We begin with the raw amino-acid sequence, 275 residues long: Glucan endo-1,3-beta-glucosidase, acidic isoform PR-N (275 aa).

Residue Glu196 is the Nucleophile of the active site.

Belongs to the glycosyl hydrolase 17 family. In terms of processing, the N-terminus is blocked.

It is found in the secreted. It localises to the extracellular space. It catalyses the reaction Hydrolysis of (1-&gt;3)-beta-D-glucosidic linkages in (1-&gt;3)-beta-D-glucans.. Its function is as follows. Implicated in the defense of plants against pathogens. This Nicotiana tabacum (Common tobacco) protein is Glucan endo-1,3-beta-glucosidase, acidic isoform PR-N (PRN).